The sequence spans 278 residues: Energy-coupling factor transporter ATP-binding protein EcfA1 (278 aa).

The ABC transporter domain maps to 5 to 240; that stretch reads IEVRNLKYKY…EDLEELGLDQ (236 aa). Residue 40–47 coordinates ATP; it reads GHNGSGKS.

Belongs to the ABC transporter superfamily. Energy-coupling factor EcfA family. Forms a stable energy-coupling factor (ECF) transporter complex composed of 2 membrane-embedded substrate-binding proteins (S component), 2 ATP-binding proteins (A component) and 2 transmembrane proteins (T component).

It is found in the cell membrane. Its function is as follows. ATP-binding (A) component of a common energy-coupling factor (ECF) ABC-transporter complex. Unlike classic ABC transporters this ECF transporter provides the energy necessary to transport a number of different substrates. This Streptococcus sanguinis (strain SK36) protein is Energy-coupling factor transporter ATP-binding protein EcfA1.